The chain runs to 58 residues: Metallothionein (58 aa).

Residues 1 to 29 form a beta region; sequence PDPCCAEGTCECEEGKCKAGCKCTSCRCS. A divalent metal cation-binding residues include Cys-4, Cys-5, Cys-10, Cys-12, Cys-17, Cys-21, Cys-23, Cys-26, Cys-28, Cys-31, Cys-34, Cys-38, Cys-40, Cys-46, Cys-50, Cys-54, Cys-56, and Cys-57. The interval 30-58 is alpha; sequence PCEKCTSECECKSKEECAKNCTKPCSCCP.

In terms of biological role, metallothioneins have a high content of cysteine residues that bind various heavy metals. Class I MTS in crustacea are involved in the sequestration of elevated levels of heavy-metal ions. This chain is Metallothionein, found in Potamon potamios.